Consider the following 912-residue polypeptide: Effector protein hopAE1 (912 aa).

Over residues 1 to 13 the composition is skewed to polar residues; it reads MMPSQITRSSHSS. The disordered stretch occupies residues 1 to 32; it reads MMPSQITRSSHSSLPEVAPASGDATGVSEQTP.

Belongs to the HopW family.

It localises to the secreted. The chain is Effector protein hopAE1 (hopAE1) from Pseudomonas savastanoi pv. phaseolicola (strain 1448A / Race 6) (Pseudomonas syringae pv. phaseolicola (strain 1448A / Race 6)).